We begin with the raw amino-acid sequence, 113 residues long: Large ribosomal subunit protein bL19 (113 aa).

The protein belongs to the bacterial ribosomal protein bL19 family.

Functionally, this protein is located at the 30S-50S ribosomal subunit interface and may play a role in the structure and function of the aminoacyl-tRNA binding site. This is Large ribosomal subunit protein bL19 from Moorella thermoacetica (strain ATCC 39073 / JCM 9320).